Reading from the N-terminus, the 613-residue chain is 4-hydroxy-3-methylbut-2-en-1-yl diphosphate synthase (flavodoxin) (613 aa).

[4Fe-4S] cluster contacts are provided by cysteine 521, cysteine 524, cysteine 555, and glutamate 562.

The protein belongs to the IspG family. It depends on [4Fe-4S] cluster as a cofactor.

It carries out the reaction (2E)-4-hydroxy-3-methylbut-2-enyl diphosphate + oxidized [flavodoxin] + H2O + 2 H(+) = 2-C-methyl-D-erythritol 2,4-cyclic diphosphate + reduced [flavodoxin]. It participates in isoprenoid biosynthesis; isopentenyl diphosphate biosynthesis via DXP pathway; isopentenyl diphosphate from 1-deoxy-D-xylulose 5-phosphate: step 5/6. Its function is as follows. Converts 2C-methyl-D-erythritol 2,4-cyclodiphosphate (ME-2,4cPP) into 1-hydroxy-2-methyl-2-(E)-butenyl 4-diphosphate. This is 4-hydroxy-3-methylbut-2-en-1-yl diphosphate synthase (flavodoxin) from Bacteroides thetaiotaomicron (strain ATCC 29148 / DSM 2079 / JCM 5827 / CCUG 10774 / NCTC 10582 / VPI-5482 / E50).